The following is a 401-amino-acid chain: 2,3,4,5-tetrahydropyridine-2,6-dicarboxylate N-succinyltransferase (401 aa).

Glu269 acts as the Acyl-anhydride intermediate in catalysis. Succinyl-CoA-binding positions include Arg271, Gly286, Ser289, Ala312, 327–328, Gly335, and Lys364; that span reads DA.

It belongs to the type 2 tetrahydrodipicolinate N-succinyltransferase family. Homotrimer.

The protein localises to the cytoplasm. It carries out the reaction (S)-2,3,4,5-tetrahydrodipicolinate + succinyl-CoA + H2O = (S)-2-succinylamino-6-oxoheptanedioate + CoA. It functions in the pathway amino-acid biosynthesis; L-lysine biosynthesis via DAP pathway; LL-2,6-diaminopimelate from (S)-tetrahydrodipicolinate (succinylase route): step 1/3. Functionally, catalyzes the conversion of the cyclic tetrahydrodipicolinate (THDP) into the acyclic N-succinyl-L-2-amino-6-oxopimelate using succinyl-CoA. This is 2,3,4,5-tetrahydropyridine-2,6-dicarboxylate N-succinyltransferase from Helicobacter pylori (strain ATCC 700392 / 26695) (Campylobacter pylori).